Consider the following 285-residue polypeptide: DegV domain-containing protein CA_C3284 (285 aa).

The DegV domain maps to Val-3 to Thr-280. Hexadecanoate is bound by residues Ser-59 and Ser-91.

In terms of biological role, may bind long-chain fatty acids, such as palmitate, and may play a role in lipid transport or fatty acid metabolism. This is DegV domain-containing protein CA_C3284 from Clostridium acetobutylicum (strain ATCC 824 / DSM 792 / JCM 1419 / IAM 19013 / LMG 5710 / NBRC 13948 / NRRL B-527 / VKM B-1787 / 2291 / W).